The primary structure comprises 282 residues: Homeobox protein CDX-4 (282 aa).

Disordered stretches follow at residues Met13 to Gly36 and Met98 to Ala156. Low complexity predominate over residues Ser20–Val29. Polar residues-rich tracts occupy residues Asp110 to Gly124 and Ser133 to Ser148. Residues Lys171–Ile230 constitute a DNA-binding region (homeobox).

This sequence belongs to the Caudal homeobox family.

It localises to the nucleus. In Mus musculus (Mouse), this protein is Homeobox protein CDX-4 (Cdx4).